We begin with the raw amino-acid sequence, 325 residues long: Alpha-cuprenene synthase COP6 (325 aa).

Mg(2+) contacts are provided by Asp102, Glu166, Asn224, Ser228, and Glu232.

It belongs to the trichodiene synthase family. It depends on Mg(2+) as a cofactor.

In terms of biological role, alpha-cuprenene synthase; part of the gene cluster that mediates the biosynthesis of alpha-cuprenene and oxidized derivatives. The alpha-cuprenene synthase COP6 is the only sesquiterpene synthase identified in C.cinereus that appears to be part of a biosynthetic gene cluster and is highly specific since it catalyzes the cyclization of (2E,6E)-farnesyl diphosphate into only one product, alpha-cuprenene. COP6 is also able to perform the cyclization of geranyl diphosphate. The cytochrome P450 monooxygenase COX2 then oxidizes the cyclohexadiene ring of alpha-cuprenene at positions 1 and 4, yielding first alpha-cuparene, followed by alpha-cuparophenol and a further yet unidentified compound resulting from one additional oxidation step. The cytochrome P450 monooxygenase COX1 then likely catalyzes the oxidation at position 9 of the pentane ring of alpha-cuprenene to give the corresponding hydroxy or ketone derivatives. The chain is Alpha-cuprenene synthase COP6 from Coprinopsis cinerea (strain Okayama-7 / 130 / ATCC MYA-4618 / FGSC 9003) (Inky cap fungus).